The primary structure comprises 595 residues: Elongation factor 4 (595 aa).

One can recognise a tr-type G domain in the interval 2 to 183 (KNIRNFCIIA…AIVEQVPAPA (182 aa)). Residues 14–19 (DHGKST) and 130–133 (NKVD) each bind GTP.

This sequence belongs to the TRAFAC class translation factor GTPase superfamily. Classic translation factor GTPase family. LepA subfamily.

It is found in the cell inner membrane. The enzyme catalyses GTP + H2O = GDP + phosphate + H(+). Its function is as follows. Required for accurate and efficient protein synthesis under certain stress conditions. May act as a fidelity factor of the translation reaction, by catalyzing a one-codon backward translocation of tRNAs on improperly translocated ribosomes. Back-translocation proceeds from a post-translocation (POST) complex to a pre-translocation (PRE) complex, thus giving elongation factor G a second chance to translocate the tRNAs correctly. Binds to ribosomes in a GTP-dependent manner. This Porphyromonas gingivalis (strain ATCC BAA-308 / W83) protein is Elongation factor 4.